Consider the following 172-residue polypeptide: Adenine phosphoribosyltransferase (172 aa).

This sequence belongs to the purine/pyrimidine phosphoribosyltransferase family. In terms of assembly, homodimer.

The protein resides in the cytoplasm. The catalysed reaction is AMP + diphosphate = 5-phospho-alpha-D-ribose 1-diphosphate + adenine. It participates in purine metabolism; AMP biosynthesis via salvage pathway; AMP from adenine: step 1/1. Catalyzes a salvage reaction resulting in the formation of AMP, that is energically less costly than de novo synthesis. The protein is Adenine phosphoribosyltransferase of Clostridium tetani (strain Massachusetts / E88).